A 206-amino-acid polypeptide reads, in one-letter code: Synaptosomal-associated protein 25 (206 aa).

Positions Met1 to Gln20 are enriched in basic and acidic residues. The tract at residues Met1–Ser25 is disordered. The interaction with CENPF stretch occupies residues Met1 to Glu75. The t-SNARE coiled-coil homology 1 domain occupies Asp19 to Leu81. S-palmitoyl cysteine attachment occurs at residues Cys85, Cys88, Cys90, and Cys92. Residues Gly111–Val120 form an interaction with ZDHHC17 region. Residue Thr138 is modified to Phosphothreonine. In terms of domain architecture, t-SNARE coiled-coil homology 2 spans Asp140 to Met202. A phosphoserine mark is found at Ser154 and Ser187.

It belongs to the SNAP-25 family. In terms of assembly, part of the SNARE core complex containing SNAP25, VAMP2 and STX1A; this complex binds CPLX1. Found in a complex containing SYT1, SV2B and syntaxin-1. Found in a ternary complex with STX1A and VAMP8. Interacts with HSC70 and with SYT9, forming a complex with DNAJC5. The interaction with SYT9 is inhibited in presence of calcium. Isoform 1 and isoform 2 interact with BLOC1S6. Interacts with CENPF. Interacts with EQTN. Interacts with HGS. Interacts with KCNB1 (via N-terminus); reduces the voltage-dependent potassium channel KCNB1 activity in pancreatic beta cells. Interacts with OTOF. Interacts with RIMS1. Interacts with SNAPIN. Interacts with STXBP6. Interacts with TRIM9. Interacts with ZDHHC13 (via ANK repeats). Interacts with ZDHHC17 (via ANK repeats). Associates with the BLOC-1 complex. Interacts with PLCL1 (via C2 domain). Interacts with PRRT2; this interaction may impair the formation of the SNARE complex. Interacts with alpha-synuclein/SNCA. Interacts with PRPH2. Interacts with ROM1. Interacts with STX3. Post-translationally, palmitoylated. Cys-85 appears to be the main site, and palmitoylation is required for membrane association.

The protein localises to the cytoplasm. It is found in the perinuclear region. Its subcellular location is the cell membrane. The protein resides in the synapse. It localises to the synaptosome. The protein localises to the photoreceptor inner segment. In terms of biological role, t-SNARE involved in the molecular regulation of neurotransmitter release. May play an important role in the synaptic function of specific neuronal systems. Associates with proteins involved in vesicle docking and membrane fusion. Regulates plasma membrane recycling through its interaction with CENPF. Modulates the gating characteristics of the delayed rectifier voltage-dependent potassium channel KCNB1 in pancreatic beta cells. The sequence is that of Synaptosomal-associated protein 25 (SNAP25) from Pongo abelii (Sumatran orangutan).